The primary structure comprises 119 residues: Large ribosomal subunit protein bL20 (119 aa).

It belongs to the bacterial ribosomal protein bL20 family.

Functionally, binds directly to 23S ribosomal RNA and is necessary for the in vitro assembly process of the 50S ribosomal subunit. It is not involved in the protein synthesizing functions of that subunit. In Cellvibrio japonicus (strain Ueda107) (Pseudomonas fluorescens subsp. cellulosa), this protein is Large ribosomal subunit protein bL20.